A 171-amino-acid polypeptide reads, in one-letter code: Shikimate kinase (171 aa).

An ATP-binding site is contributed by 14-19; sequence GAGKST. Residue Ser18 participates in Mg(2+) binding. 3 residues coordinate substrate: Asp36, Arg60, and Gly82. Position 120 (Arg120) interacts with ATP. Arg139 lines the substrate pocket. Gln156 contacts ATP.

This sequence belongs to the shikimate kinase family. Monomer. Mg(2+) serves as cofactor.

It is found in the cytoplasm. The catalysed reaction is shikimate + ATP = 3-phosphoshikimate + ADP + H(+). The protein operates within metabolic intermediate biosynthesis; chorismate biosynthesis; chorismate from D-erythrose 4-phosphate and phosphoenolpyruvate: step 5/7. In terms of biological role, catalyzes the specific phosphorylation of the 3-hydroxyl group of shikimic acid using ATP as a cosubstrate. The sequence is that of Shikimate kinase from Shewanella putrefaciens (strain CN-32 / ATCC BAA-453).